Consider the following 157-residue polypeptide: S-ribosylhomocysteine lyase (157 aa).

Fe cation-binding residues include H54, H58, and C126.

The protein belongs to the LuxS family. In terms of assembly, homodimer. It depends on Fe cation as a cofactor.

It carries out the reaction S-(5-deoxy-D-ribos-5-yl)-L-homocysteine = (S)-4,5-dihydroxypentane-2,3-dione + L-homocysteine. Involved in the synthesis of autoinducer 2 (AI-2) which is secreted by bacteria and is used to communicate both the cell density and the metabolic potential of the environment. The regulation of gene expression in response to changes in cell density is called quorum sensing. Catalyzes the transformation of S-ribosylhomocysteine (RHC) to homocysteine (HC) and 4,5-dihydroxy-2,3-pentadione (DPD). In Bacillus cytotoxicus (strain DSM 22905 / CIP 110041 / 391-98 / NVH 391-98), this protein is S-ribosylhomocysteine lyase.